Reading from the N-terminus, the 420-residue chain is Putative epoxide hydrolase (420 aa).

The protein belongs to the peptidase S33 family.

The protein operates within mycotoxin biosynthesis. In terms of biological role, putative epoxide hydrolase; part of the fragmented gene cluster that mediates the biosynthesis of dothistromin (DOTH), a polyketide toxin very similar in structure to the aflatoxin precursor, versicolorin B. The first step of the pathway is the conversion of acetate to norsolorinic acid (NOR) and requires the fatty acid synthase subunits hexA and hexB, as well as the polyketide synthase pksA. PksA combines a hexanoyl starter unit and 7 malonyl-CoA extender units to synthesize the precursor NOR. The hexanoyl starter unit is provided to the acyl-carrier protein (ACP) domain by the fungal fatty acid synthase hexA/hexB. The second step is the conversion of NOR to averantin (AVN) and requires the norsolorinic acid ketoreductase nor1, which catalyzes the dehydration of norsolorinic acid to form (1'S)-averantin. The cytochrome P450 monooxygenase avnA then catalyzes the hydroxylation of AVN to 5'hydroxyaverantin (HAVN). The next step is performed by adhA that transforms HAVN to averufin (AVF). Averufin might then be converted to hydroxyversicolorone by cypX and avfA. Hydroxyversicolorone is further converted versiconal hemiacetal acetate (VHA) by moxY. VHA is then the substrate for the versiconal hemiacetal acetate esterase est1 to yield versiconal (VAL). Versicolorin B synthase vbsA then converts VAL to versicolorin B (VERB) by closing the bisfuran ring. Then, the activity of the versicolorin B desaturase verB leads to versicolorin A (VERA). DotB, a predicted chloroperoxidase, may perform epoxidation of the A-ring of VERA. Alternatively, a cytochrome P450, such as cypX or avnA could catalyze this step. It is also possible that another, uncharacterized, cytochrome P450 enzyme is responsible for this step. Opening of the epoxide could potentially be achieved by the epoxide hydrolase epoA. However, epoA seems not to be required for DOTH biosynthesis, but other epoxide hydrolases may have the ability to complement this hydrolysis. Alternatively, opening of the epoxide ring could be achieved non-enzymatically. The next step is the deoxygenation of ring A to yield the 5,8-dihydroxyanthraquinone which is most likely catalyzed by the NADPH dehydrogenase encoded by ver1. The last stages of DOTH biosynthesis are proposed to involve hydroxylation of the bisfuran. OrdB and norB might have oxidative roles here. An alternative possibility is that cytochrome P450 monoogenases such as avnA and cypX might perform these steps in addition to previously proposed steps. In Dothistroma septosporum (Red band needle blight fungus), this protein is Putative epoxide hydrolase.